The primary structure comprises 102 residues: MATAIVRSALSRAVTRAAPKTSVAPKRNFSSSAGHDDAYEAAKWEKITYLGIASCTALAVYVLSKGHHHGEDPPAYPHMHIRNKEFPWGPDGLFEVKHNKEH.

Residues 1–36 (MATAIVRSALSRAVTRAAPKTSVAPKRNFSSSAGHD) constitute a mitochondrion transit peptide.

Belongs to the cytochrome c oxidase subunit 6A (TC 3.D.4.11) family.

Its subcellular location is the mitochondrion inner membrane. Functionally, this protein is one of the nuclear-coded polypeptide chains of cytochrome c oxidase, the terminal oxidase in mitochondrial electron transport. This Arabidopsis thaliana (Mouse-ear cress) protein is Cytochrome c oxidase subunit 6a, mitochondrial (COX6A).